The sequence spans 122 residues: Large ribosomal subunit protein uL14 (122 aa).

The protein belongs to the universal ribosomal protein uL14 family. In terms of assembly, part of the 50S ribosomal subunit. Forms a cluster with proteins L3 and L19. In the 70S ribosome, L14 and L19 interact and together make contacts with the 16S rRNA in bridges B5 and B8.

Functionally, binds to 23S rRNA. Forms part of two intersubunit bridges in the 70S ribosome. In Shewanella sediminis (strain HAW-EB3), this protein is Large ribosomal subunit protein uL14.